Consider the following 662-residue polypeptide: Biosynthetic arginine decarboxylase (662 aa).

Position 127 is an N6-(pyridoxal phosphate)lysine (lysine 127). Position 307-317 (307-317) interacts with substrate; sequence FDVGGGLGVDY.

The protein belongs to the Orn/Lys/Arg decarboxylase class-II family. SpeA subfamily. In terms of assembly, homotetramer. Mg(2+) serves as cofactor. Requires pyridoxal 5'-phosphate as cofactor.

It localises to the periplasm. It carries out the reaction L-arginine + H(+) = agmatine + CO2. Its pathway is amine and polyamine biosynthesis; agmatine biosynthesis; agmatine from L-arginine: step 1/1. Its function is as follows. Catalyzes the biosynthesis of agmatine from arginine. In Shigella flexneri, this protein is Biosynthetic arginine decarboxylase.